A 465-amino-acid chain; its full sequence is Putative F-box/FBD/LRR-repeat protein At1g22000 (465 aa).

The region spanning 28 to 74 is the F-box domain; sequence ETRICALPDDLLLQILPHVPTKEAVATSILSKQWRYVWLMLPKLEFK. LRR repeat units follow at residues 154 to 181, 182 to 207, 210 to 230, 248 to 273, and 339 to 365; these read CLTL…SLHY, VVYK…SVHS, DDNL…NYDE, NEVE…HLSE, and ISLV…TIDN. The 52-residue stretch at 373 to 424 folds into the FBD domain; it reads SWNQPSSIPGCLLSHLETFRWRGYGGREDAKKLLMTYILANSKCLKTVEISL.

The sequence is that of Putative F-box/FBD/LRR-repeat protein At1g22000 from Arabidopsis thaliana (Mouse-ear cress).